We begin with the raw amino-acid sequence, 184 residues long: Non-fimbrial adhesin 1 (184 aa).

A signal peptide spans 1–28; it reads MKAKKYENQIYNENGRRCQRHGRRLAIA. Residues Cys-57 and Cys-91 are joined by a disulfide bond.

Forms a polymeric structure, which disintegrates with elevated temperature into a monomer but with some relatively stable dimers.

The chain is Non-fimbrial adhesin 1 (nfaA) from Escherichia coli.